The chain runs to 283 residues: ATP synthase gamma chain (283 aa).

It belongs to the ATPase gamma chain family. F-type ATPases have 2 components, CF(1) - the catalytic core - and CF(0) - the membrane proton channel. CF(1) has five subunits: alpha(3), beta(3), gamma(1), delta(1), epsilon(1). CF(0) has three main subunits: a, b and c.

Its subcellular location is the cell membrane. Functionally, produces ATP from ADP in the presence of a proton gradient across the membrane. The gamma chain is believed to be important in regulating ATPase activity and the flow of protons through the CF(0) complex. The chain is ATP synthase gamma chain from Clostridium kluyveri (strain NBRC 12016).